The following is a 119-amino-acid chain: Short coiled-coil protein A (119 aa).

A compositionally biased stretch (acidic residues) spans 1-10; that stretch reads MEGDVDEDDG. The segment at 1-26 is disordered; it reads MEGDVDEDDGTFTNISLADDSADGEP. Residues 48–95 adopt a coiled-coil conformation; sequence MENQVEQEEKTRLINQVLELQHTLEDLSARVDAVKEENLKLKSENQVL.

It belongs to the SCOC family.

It localises to the golgi apparatus membrane. The protein localises to the golgi apparatus. The protein resides in the trans-Golgi network. It is found in the cytoplasm. Its subcellular location is the cytosol. Its function is as follows. Positive regulator of amino acid starvation-induced autophagy. The chain is Short coiled-coil protein A (scoca) from Danio rerio (Zebrafish).